Consider the following 212-residue polypeptide: Vesicle transport protein SFT2C (212 aa).

Residues 1-78 (MADLHRQLQD…TRGQRLVAGG (78 aa)) lie on the Cytoplasmic side of the membrane. A helical membrane pass occupies residues 79-99 (LCLLLAALCFGLAALYAPVLL). Topologically, residues 100-104 (LRARK) are lumenal. Residues 105 to 125 (FALLWSLGSVLAWASAALLRG) form a helical membrane-spanning segment. The Cytoplasmic portion of the chain corresponds to 126–142 (GPACGRLLRGEETPSRS). The chain crosses the membrane as a helical span at residues 143-165 (TLGYAAALGATLYAALVLRSTVL). Residues 166–174 (TALGACAQV) lie on the Lumenal side of the membrane. The helical transmembrane segment at 175–197 (AALLYALIGLLPWGGVTALRLAL) threads the bilayer. Over 198 to 212 (GRLNRGTGLANALPV) the chain is Cytoplasmic.

It belongs to the SFT2 family.

The protein resides in the membrane. May be involved in fusion of retrograde transport vesicles derived from an endocytic compartment with the Golgi complex. This Mus musculus (Mouse) protein is Vesicle transport protein SFT2C.